We begin with the raw amino-acid sequence, 366 residues long: Peptide chain release factor 2 (366 aa).

N5-methylglutamine is present on Q253.

It belongs to the prokaryotic/mitochondrial release factor family. Methylated by PrmC. Methylation increases the termination efficiency of RF2.

The protein resides in the cytoplasm. Its function is as follows. Peptide chain release factor 2 directs the termination of translation in response to the peptide chain termination codons UGA and UAA. This chain is Peptide chain release factor 2 (prfB), found in Buchnera aphidicola subsp. Baizongia pistaciae (strain Bp).